Consider the following 885-residue polypeptide: Rho GTPase-activating protein gacFF (885 aa).

Residues 168–182 (TTTNNSNNSNSNNNN) show a composition bias toward low complexity. The segment at 168–187 (TTTNNSNNSNSNNNNKQYNS) is disordered. Residues 222 to 249 (LINKIQNDSEQLKLVLSQVEQQIEFLKS) adopt a coiled-coil conformation. Positions 348-394 (SDIFSLLPTHLTLYVFSYLEPKELLILAQVSSQWQKLAGDNLLWVRF) constitute an F-box domain. The region spanning 464–571 (SSSKEGWLYK…WMILLNSIIK (108 aa)) is the PH domain. Low complexity-rich tracts occupy residues 594–622 (NNVY…NNNN) and 629–648 (LPPL…SSTG). The tract at residues 594–680 (NNVYINNNNN…GGGSGGNNNF (87 aa)) is disordered. One can recognise a Rho-GAP domain in the interval 701-885 (VALSKILENQ…KYYDEIFIKK (185 aa)).

Its subcellular location is the cytoplasm. Rho GTPase-activating protein involved in the signal transduction pathway. This is Rho GTPase-activating protein gacFF (gacFF) from Dictyostelium discoideum (Social amoeba).